Consider the following 261-residue polypeptide: Cytochrome c oxidase subunit 3 (261 aa).

The Mitochondrial matrix segment spans residues 1–15 (MTHQTHAYHMVNPSP). Residues 16 to 34 (WPLTGALSALLLTSGLIMW) form a helical membrane-spanning segment. At 35 to 40 (FHFNSF) the chain is on the mitochondrial intermembrane side. The chain crosses the membrane as a helical span at residues 41–66 (LLVIIGLTCMLLTMYQWWRDIVREGT). Residues 67–72 (FQGHHT) lie on the Mitochondrial matrix side of the membrane. A helical transmembrane segment spans residues 73–105 (PVVQKGLRYGMVLFIVSEVFFFLGFFWAFYHSS). Residues 106 to 128 (LAPTPELGGCWPPTGIHPLNPLE) lie on the Mitochondrial intermembrane side of the membrane. The chain crosses the membrane as a helical span at residues 129–152 (VPLLNTSILLASGVSITWAHHSLM). Over 153-155 (EGN) the chain is Mitochondrial matrix. Residues 156-183 (RKQMIQALSITILLGIYFTILQASEYYE) form a helical membrane-spanning segment. The Mitochondrial intermembrane segment spans residues 184–190 (SSFTISD). The chain crosses the membrane as a helical span at residues 191–223 (GVYGSTFFVATGFHGLHVIIGTTFLIVCLLRQF). The Mitochondrial matrix segment spans residues 224–232 (NFHFTSTHH). A helical membrane pass occupies residues 233-256 (FGFEAAAWYWHFVDVVWLFLYVSI). The Mitochondrial intermembrane segment spans residues 257 to 261 (YWWGS).

Belongs to the cytochrome c oxidase subunit 3 family. As to quaternary structure, component of the cytochrome c oxidase (complex IV, CIV), a multisubunit enzyme composed of 14 subunits. The complex is composed of a catalytic core of 3 subunits MT-CO1, MT-CO2 and MT-CO3, encoded in the mitochondrial DNA, and 11 supernumerary subunits COX4I, COX5A, COX5B, COX6A, COX6B, COX6C, COX7A, COX7B, COX7C, COX8 and NDUFA4, which are encoded in the nuclear genome. The complex exists as a monomer or a dimer and forms supercomplexes (SCs) in the inner mitochondrial membrane with NADH-ubiquinone oxidoreductase (complex I, CI) and ubiquinol-cytochrome c oxidoreductase (cytochrome b-c1 complex, complex III, CIII), resulting in different assemblies (supercomplex SCI(1)III(2)IV(1) and megacomplex MCI(2)III(2)IV(2)).

Its subcellular location is the mitochondrion inner membrane. The catalysed reaction is 4 Fe(II)-[cytochrome c] + O2 + 8 H(+)(in) = 4 Fe(III)-[cytochrome c] + 2 H2O + 4 H(+)(out). Its function is as follows. Component of the cytochrome c oxidase, the last enzyme in the mitochondrial electron transport chain which drives oxidative phosphorylation. The respiratory chain contains 3 multisubunit complexes succinate dehydrogenase (complex II, CII), ubiquinol-cytochrome c oxidoreductase (cytochrome b-c1 complex, complex III, CIII) and cytochrome c oxidase (complex IV, CIV), that cooperate to transfer electrons derived from NADH and succinate to molecular oxygen, creating an electrochemical gradient over the inner membrane that drives transmembrane transport and the ATP synthase. Cytochrome c oxidase is the component of the respiratory chain that catalyzes the reduction of oxygen to water. Electrons originating from reduced cytochrome c in the intermembrane space (IMS) are transferred via the dinuclear copper A center (CU(A)) of subunit 2 and heme A of subunit 1 to the active site in subunit 1, a binuclear center (BNC) formed by heme A3 and copper B (CU(B)). The BNC reduces molecular oxygen to 2 water molecules using 4 electrons from cytochrome c in the IMS and 4 protons from the mitochondrial matrix. The sequence is that of Cytochrome c oxidase subunit 3 (MT-CO3) from Osphranter robustus (Wallaroo).